We begin with the raw amino-acid sequence, 360 residues long: Chorismate synthase (360 aa).

NADP(+)-binding residues include Arg-48 and Arg-54. Residues 125 to 127 (RSS), 246 to 247 (NA), Gly-286, 301 to 305 (KPTSS), and Arg-327 each bind FMN.

The protein belongs to the chorismate synthase family. As to quaternary structure, homotetramer. It depends on FMNH2 as a cofactor.

It carries out the reaction 5-O-(1-carboxyvinyl)-3-phosphoshikimate = chorismate + phosphate. Its pathway is metabolic intermediate biosynthesis; chorismate biosynthesis; chorismate from D-erythrose 4-phosphate and phosphoenolpyruvate: step 7/7. Functionally, catalyzes the anti-1,4-elimination of the C-3 phosphate and the C-6 proR hydrogen from 5-enolpyruvylshikimate-3-phosphate (EPSP) to yield chorismate, which is the branch point compound that serves as the starting substrate for the three terminal pathways of aromatic amino acid biosynthesis. This reaction introduces a second double bond into the aromatic ring system. This Actinobacillus pleuropneumoniae serotype 5b (strain L20) protein is Chorismate synthase.